Reading from the N-terminus, the 418-residue chain is Serine hydroxymethyltransferase (418 aa).

(6S)-5,6,7,8-tetrahydrofolate-binding positions include Leu-121 and 125–127 (GHL). The residue at position 230 (Lys-230) is an N6-(pyridoxal phosphate)lysine. 356–358 (SPF) provides a ligand contact to (6S)-5,6,7,8-tetrahydrofolate.

It belongs to the SHMT family. In terms of assembly, homodimer. Requires pyridoxal 5'-phosphate as cofactor.

The protein localises to the cytoplasm. The catalysed reaction is (6R)-5,10-methylene-5,6,7,8-tetrahydrofolate + glycine + H2O = (6S)-5,6,7,8-tetrahydrofolate + L-serine. It participates in one-carbon metabolism; tetrahydrofolate interconversion. The protein operates within amino-acid biosynthesis; glycine biosynthesis; glycine from L-serine: step 1/1. Catalyzes the reversible interconversion of serine and glycine with tetrahydrofolate (THF) serving as the one-carbon carrier. This reaction serves as the major source of one-carbon groups required for the biosynthesis of purines, thymidylate, methionine, and other important biomolecules. Also exhibits THF-independent aldolase activity toward beta-hydroxyamino acids, producing glycine and aldehydes, via a retro-aldol mechanism. The sequence is that of Serine hydroxymethyltransferase from Shewanella piezotolerans (strain WP3 / JCM 13877).